The following is a 638-amino-acid chain: Chaperone protein DnaK (638 aa).

T198 is modified (phosphothreonine; by autocatalysis). The span at 603-618 shows a compositional bias: low complexity; that stretch reads QQAQAQQAQGADADAQ. The segment at 603–638 is disordered; it reads QQAQAQQAQGADADAQQSKEDDVVDAEFEEVKDDKK. Positions 624–638 are enriched in acidic residues; that stretch reads DVVDAEFEEVKDDKK.

Belongs to the heat shock protein 70 family.

Acts as a chaperone. This Vibrio campbellii (strain ATCC BAA-1116) protein is Chaperone protein DnaK.